We begin with the raw amino-acid sequence, 173 residues long: Putative 2-oxo-4-hydroxy-4-carboxy-5-ureidoimidazoline decarboxylase (173 aa).

The Proton donor role is filled by His67. Substrate-binding positions include Pro68, 84–88, and 119–123; these read SQREQ and FVLAA. Residues 171-173 carry the Microbody targeting signal motif; sequence AKL.

The protein belongs to the OHCU decarboxylase family. Apparently not expressed.

Its subcellular location is the peroxisome. The catalysed reaction is 5-hydroxy-2-oxo-4-ureido-2,5-dihydro-1H-imidazole-5-carboxylate + H(+) = (S)-allantoin + CO2. It functions in the pathway purine metabolism; urate degradation; (S)-allantoin from urate: step 3/3. Functionally, catalyzes the stereoselective decarboxylation of 2-oxo-4-hydroxy-4-carboxy-5-ureidoimidazoline (OHCU) to (S)-allantoin. This chain is Putative 2-oxo-4-hydroxy-4-carboxy-5-ureidoimidazoline decarboxylase (URAD), found in Homo sapiens (Human).